The following is a 385-amino-acid chain: 3-hydroxyisobutyryl-CoA hydrolase, mitochondrial (385 aa).

Residues 1–32 (MGQPYAWRLLSRVSSFRRASVILQHLRMSMHT) constitute a mitochondrion transit peptide. Residues Lys54, Lys91, and Lys100 each carry the N6-acetyllysine; alternate modification. An N6-succinyllysine; alternate mark is found at Lys54, Lys91, and Lys100. Positions 120, 145, 168, and 176 each coordinate substrate. Position 220 is an N6-acetyllysine; alternate (Lys220). N6-succinyllysine; alternate is present on Lys220. Position 233 is a phosphoserine (Ser233). N6-succinyllysine occurs at positions 249 and 256. Lys296 carries the N6-acetyllysine; alternate modification. Lys296 bears the N6-succinyllysine; alternate mark. Residue Lys300 is modified to N6-succinyllysine. Lys352 bears the N6-acetyllysine; alternate mark. N6-succinyllysine; alternate is present on Lys352. Residues Lys359 and Lys364 each carry the N6-acetyllysine modification. Lys376 is modified (N6-succinyllysine).

This sequence belongs to the enoyl-CoA hydratase/isomerase family.

It is found in the mitochondrion. It carries out the reaction 3-hydroxy-2-methylpropanoyl-CoA + H2O = 3-hydroxy-2-methylpropanoate + CoA + H(+). Its pathway is amino-acid degradation; L-valine degradation. Its function is as follows. Hydrolyzes 3-hydroxyisobutyryl-CoA (HIBYL-CoA), a saline catabolite. Has high activity toward isobutyryl-CoA. Could be an isobutyryl-CoA dehydrogenase that functions in valine catabolism. Also hydrolyzes 3-hydroxypropanoyl-CoA. This chain is 3-hydroxyisobutyryl-CoA hydrolase, mitochondrial (Hibch), found in Mus musculus (Mouse).